Here is a 142-residue protein sequence, read N- to C-terminus: Profilin (142 aa).

Belongs to the profilin family. Occurs in many kinds of cells as a complex with monomeric actin in a 1:1 ratio. As to expression, expressed specifically in coelomocytes in response to injury.

The protein resides in the cytoplasm. It is found in the cytoskeleton. Functionally, binds to actin and affects the structure of the cytoskeleton. At high concentrations, profilin prevents the polymerization of actin, whereas it enhances it at low concentrations. By binding to PIP2, it inhibits the formation of IP3 and DG. In Strongylocentrotus purpuratus (Purple sea urchin), this protein is Profilin.